The sequence spans 232 residues: Probable proteasome subunit alpha type-5 (232 aa).

It belongs to the peptidase T1A family. In terms of assembly, the 26S proteasome consists of a 20S proteasome core and two 19S regulatory subunits. The 20S proteasome core is composed of 28 subunits that are arranged in four stacked rings, resulting in a barrel-shaped structure. The two end rings are each formed by seven alpha subunits, and the two central rings are each formed by seven beta subunits. The catalytic chamber with the active sites is on the inside of the barrel.

The protein resides in the cytoplasm. It is found in the nucleus. The proteasome degrades poly-ubiquitinated proteins in the cytoplasm and in the nucleus. It is essential for the regulated turnover of proteins and for the removal of misfolded proteins. The proteasome is a multicatalytic proteinase complex that is characterized by its ability to cleave peptides with Arg, Phe, Tyr, Leu, and Glu adjacent to the leaving group at neutral or slightly basic pH. It has an ATP-dependent proteolytic activity. The protein is Probable proteasome subunit alpha type-5 (PUP2) of Encephalitozoon cuniculi (strain GB-M1) (Microsporidian parasite).